The following is a 267-amino-acid chain: Ubiquinone biosynthesis protein COQ4 homolog, mitochondrial (267 aa).

Histidine 170, aspartate 171, histidine 174, and glutamate 186 together coordinate Zn(2+).

Belongs to the COQ4 family. Component of a multi-subunit COQ enzyme complex. The cofactor is Zn(2+).

Its subcellular location is the mitochondrion inner membrane. The enzyme catalyses a 4-hydroxy-3-methoxy-5-(all-trans-polyprenyl)benzoate + H(+) = a 2-methoxy-6-(all-trans-polyprenyl)phenol + CO2. It participates in cofactor biosynthesis; ubiquinone biosynthesis. Lyase that catalyzes the C1-decarboxylation of 4-hydroxy-3-methoxy-5-(all-trans-polyprenyl)benzoic acid into 2-methoxy-6-(all-trans-polyprenyl)phenol during ubiquinone biosynthesis. In Drosophila pseudoobscura pseudoobscura (Fruit fly), this protein is Ubiquinone biosynthesis protein COQ4 homolog, mitochondrial.